The chain runs to 152 residues: Plant UBX domain-containing protein 12 (152 aa).

Residues 32 to 61 form a disordered region; sequence KRFSEEESEETENTTNSSNAVFGFPNLPEE. One can recognise a UBX domain in the interval 67-150; the sequence is DQSVLCRICV…GLANSLVSVT (84 aa).

The sequence is that of Plant UBX domain-containing protein 12 from Arabidopsis thaliana (Mouse-ear cress).